The chain runs to 440 residues: tRNA-2-methylthio-N(6)-dimethylallyladenosine synthase (440 aa).

One can recognise an MTTase N-terminal domain in the interval 3–119 (KKFFIKTFGC…LPELINQAQA (117 aa)). Cys12, Cys48, Cys82, Cys158, Cys162, and Cys165 together coordinate [4Fe-4S] cluster. A Radical SAM core domain is found at 144–374 (RDNKYCAYVT…LELQKSILSE (231 aa)). Positions 377-437 (KKYEGTVQEV…PFSLEGELLE (61 aa)) constitute a TRAM domain.

The protein belongs to the methylthiotransferase family. MiaB subfamily. Monomer. [4Fe-4S] cluster serves as cofactor.

The protein localises to the cytoplasm. The enzyme catalyses N(6)-dimethylallyladenosine(37) in tRNA + (sulfur carrier)-SH + AH2 + 2 S-adenosyl-L-methionine = 2-methylsulfanyl-N(6)-dimethylallyladenosine(37) in tRNA + (sulfur carrier)-H + 5'-deoxyadenosine + L-methionine + A + S-adenosyl-L-homocysteine + 2 H(+). Functionally, catalyzes the methylthiolation of N6-(dimethylallyl)adenosine (i(6)A), leading to the formation of 2-methylthio-N6-(dimethylallyl)adenosine (ms(2)i(6)A) at position 37 in tRNAs that read codons beginning with uridine. This chain is tRNA-2-methylthio-N(6)-dimethylallyladenosine synthase, found in Aquifex aeolicus (strain VF5).